The following is a 215-amino-acid chain: L-fuculose phosphate aldolase (215 aa).

Substrate is bound by residues 28-29 (GN), 43-44 (TG), and 71-72 (SS). Residue Glu-73 is the Proton donor/acceptor of the active site. Zn(2+) is bound by residues Glu-73, His-92, His-94, and His-155.

This sequence belongs to the aldolase class II family. AraD/FucA subfamily. In terms of assembly, homotetramer. The cofactor is Zn(2+).

The catalysed reaction is L-fuculose 1-phosphate = (S)-lactaldehyde + dihydroxyacetone phosphate. It functions in the pathway carbohydrate degradation; L-fucose degradation; L-lactaldehyde and glycerone phosphate from L-fucose: step 3/3. Involved in the degradation of L-fucose and D-arabinose. Catalyzes the reversible cleavage of L-fuculose 1-phosphate (Fuc1P) to yield dihydroxyacetone phosphate (DHAP) and L-lactaldehyde. In Escherichia coli O157:H7, this protein is L-fuculose phosphate aldolase.